Consider the following 475-residue polypeptide: Ribulose bisphosphate carboxylase large chain (475 aa).

A propeptide spanning residues methionine 1–serine 2 is cleaved from the precursor. Proline 3 carries the post-translational modification N-acetylproline. At lysine 14 the chain carries N6,N6,N6-trimethyllysine. Substrate is bound by residues asparagine 123 and threonine 173. The Proton acceptor role is filled by lysine 175. Lysine 177 is a binding site for substrate. The Mg(2+) site is built by lysine 201, aspartate 203, and glutamate 204. Residue lysine 201 is modified to N6-carboxylysine. Residue histidine 294 is the Proton acceptor of the active site. Substrate contacts are provided by arginine 295, histidine 327, and serine 379.

Belongs to the RuBisCO large chain family. Type I subfamily. In terms of assembly, heterohexadecamer of 8 large chains and 8 small chains; disulfide-linked. The disulfide link is formed within the large subunit homodimers. Mg(2+) is required as a cofactor. The disulfide bond which can form in the large chain dimeric partners within the hexadecamer appears to be associated with oxidative stress and protein turnover.

It localises to the plastid. Its subcellular location is the chloroplast. It catalyses the reaction 2 (2R)-3-phosphoglycerate + 2 H(+) = D-ribulose 1,5-bisphosphate + CO2 + H2O. The enzyme catalyses D-ribulose 1,5-bisphosphate + O2 = 2-phosphoglycolate + (2R)-3-phosphoglycerate + 2 H(+). Functionally, ruBisCO catalyzes two reactions: the carboxylation of D-ribulose 1,5-bisphosphate, the primary event in carbon dioxide fixation, as well as the oxidative fragmentation of the pentose substrate in the photorespiration process. Both reactions occur simultaneously and in competition at the same active site. The protein is Ribulose bisphosphate carboxylase large chain of Psilotum nudum (Whisk fern).